Here is a 387-residue protein sequence, read N- to C-terminus: Patatin group J-1 (387 aa).

The first 23 residues, 1 to 23 (MATTKSFLILIVMILATTSSTFA), serve as a signal peptide directing secretion. A PNPLA domain is found at 32 to 230 (LSIDGGGIKG…TVGDPALLSL (199 aa)). The GXGXXG signature appears at 36 to 41 (GGGIKG). A GXSXG motif is present at residues 75-79 (GTSTG). Catalysis depends on Ser-77, which acts as the Nucleophile. N-linked (GlcNAc...) asparagine glycosylation is present at Asn-115. The active-site Proton acceptor is the Asp-216. The short motif at 216-218 (DGG) is the DGA/G element. Positions 322 to 385 (ENALTGTTTE…NRKKLRANKA (64 aa)) form a coiled coil.

This sequence belongs to the patatin family. In terms of tissue distribution, tuber.

It is found in the vacuole. In terms of biological role, probable lipolytic acyl hydrolase (LAH), an activity which is thought to be involved in the response of tubers to pathogens. This Solanum tuberosum (Potato) protein is Patatin group J-1.